Reading from the N-terminus, the 203-residue chain is ATP-dependent Clp protease proteolytic subunit 2 (203 aa).

Residue Ser97 is the Nucleophile of the active site. The active site involves His122.

The protein belongs to the peptidase S14 family. As to quaternary structure, fourteen ClpP subunits assemble into 2 heptameric rings which stack back to back to give a disk-like structure with a central cavity, resembling the structure of eukaryotic proteasomes.

The protein resides in the cytoplasm. The enzyme catalyses Hydrolysis of proteins to small peptides in the presence of ATP and magnesium. alpha-casein is the usual test substrate. In the absence of ATP, only oligopeptides shorter than five residues are hydrolyzed (such as succinyl-Leu-Tyr-|-NHMec, and Leu-Tyr-Leu-|-Tyr-Trp, in which cleavage of the -Tyr-|-Leu- and -Tyr-|-Trp bonds also occurs).. In terms of biological role, cleaves peptides in various proteins in a process that requires ATP hydrolysis. Has a chymotrypsin-like activity. Plays a major role in the degradation of misfolded proteins. In Myxococcus xanthus (strain DK1622), this protein is ATP-dependent Clp protease proteolytic subunit 2.